Reading from the N-terminus, the 344-residue chain is Treponemal membrane protein A (344 aa).

A signal peptide spans 1–21 (MKLKSLVFSLSALFLVLGFTG). Cysteine 22 carries N-palmitoyl cysteine lipidation. Cysteine 22 is lipidated: S-diacylglycerol cysteine. The interval 257 to 344 (AAKTKQELSA…TEEPIEGGVQ (88 aa)) is disordered. The segment covering 260–277 (TKQELSAKLANEADKESP) has biased composition (basic and acidic residues). Acidic residues-rich tracts occupy residues 312 to 322 (VPVEEMNENSS) and 335 to 344 (TEEPIEGGVQ).

To T.pallidum TmpA.

It is found in the cell membrane. The protein is Treponemal membrane protein A (tmpA) of Treponema phagedenis.